A 254-amino-acid chain; its full sequence is Dihydroorotate dehydrogenase B (NAD(+)), electron transfer subunit (254 aa).

The FAD-binding FR-type domain occupies 1–99 (MLQTEMKVIQ…LGPLGKGFDI (99 aa)). Residues 50 to 53 (RPIS), 67 to 69 (LYR), and 74 to 75 (GT) contribute to the FAD site. 4 residues coordinate [2Fe-2S] cluster: C218, C223, C226, and C241.

Belongs to the PyrK family. Heterotetramer of 2 PyrK and 2 PyrD type B subunits. It depends on [2Fe-2S] cluster as a cofactor. Requires FAD as cofactor.

It functions in the pathway pyrimidine metabolism; UMP biosynthesis via de novo pathway; orotate from (S)-dihydroorotate (NAD(+) route): step 1/1. In terms of biological role, responsible for channeling the electrons from the oxidation of dihydroorotate from the FMN redox center in the PyrD type B subunit to the ultimate electron acceptor NAD(+). This chain is Dihydroorotate dehydrogenase B (NAD(+)), electron transfer subunit, found in Listeria monocytogenes serotype 4a (strain HCC23).